A 765-amino-acid polypeptide reads, in one-letter code: Polyadenylate-binding protein, cytoplasmic and nuclear (765 aa).

The span at 1 to 37 shows a compositional bias: low complexity; sequence MSADASTTPAADSNVTSTPETSTTPAAPAPEVTAVES. Positions 1-49 are disordered; that stretch reads MSADASTTPAADSNVTSTPETSTTPAAPAPEVTAVESTTAPNASQPHSA. Positions 38 to 48 are enriched in polar residues; that stretch reads TTAPNASQPHS. RRM domains are found at residues 49–127, 137–214, 230–307, and 333–470; these read ASLY…WSQR, GNVF…HHIS, TNVY…RAQK, and VNLY…LAQR. Disordered regions lie at residues 364 to 427 and 619 to 657; these read VMRD…ADKK and PGYGQGRGGVPVQQGQMRPGQGGRGQNAAQAPAGRPEEA. The segment covering 377–427 has biased composition (basic and acidic residues); the sequence is ESDKEKENKEATKENEKESSEAEKAEKTEEKPADSGDEKKEDKESKKADKK. A compositionally biased stretch (low complexity) spans 628 to 637; it reads VPVQQGQMRP. The PABC domain occupies 659 to 736; the sequence is AGGLTAQALS…ALNVYDEYMK (78 aa). Residues 737–765 are disordered; the sequence is NKGGESEATGEAAKPKEAAKETSTEENKS. Residues 749–765 show a composition bias toward basic and acidic residues; sequence AKPKEAAKETSTEENKS.

The protein belongs to the polyadenylate-binding protein type-1 family.

Its subcellular location is the cytoplasm. The protein resides in the nucleus. Its function is as follows. Binds the poly(A) tail of mRNA. Appears to be an important mediator of the multiple roles of the poly(A) tail in mRNA biogenesis, stability and translation. In the nucleus, involved in both mRNA cleavage and polyadenylation. Is also required for efficient mRNA export to the cytoplasm. Acts in concert with a poly(A)-specific nuclease (PAN) to affect poly(A) tail shortening, which may occur concomitantly with either nucleocytoplasmic mRNA transport or translational initiation. In the cytoplasm, stimulates translation initiation and regulates mRNA decay through translation termination-coupled poly(A) shortening, probably mediated by PAN. In Aspergillus oryzae (strain ATCC 42149 / RIB 40) (Yellow koji mold), this protein is Polyadenylate-binding protein, cytoplasmic and nuclear (pab1).